A 60-amino-acid polypeptide reads, in one-letter code: UPF0434 protein YcaR (60 aa).

This sequence belongs to the UPF0434 family.

This is UPF0434 protein YcaR from Escherichia coli O139:H28 (strain E24377A / ETEC).